A 175-amino-acid chain; its full sequence is Ribulose bisphosphate carboxylase small subunit, chloroplastic (175 aa).

The N-terminal 46 residues, 1–46, are a transit peptide targeting the chloroplast; it reads MAPTVMASSATSVAPFQGLKSTAGLPVSRRSNGASLGSVSNGGRIR.

This sequence belongs to the RuBisCO small chain family. As to quaternary structure, heterohexadecamer of 8 large and 8 small subunits.

The protein localises to the plastid. It is found in the chloroplast. RuBisCO catalyzes two reactions: the carboxylation of D-ribulose 1,5-bisphosphate, the primary event in carbon dioxide fixation, as well as the oxidative fragmentation of the pentose substrate. Both reactions occur simultaneously and in competition at the same active site. Although the small subunit is not catalytic it is essential for maximal activity. This chain is Ribulose bisphosphate carboxylase small subunit, chloroplastic, found in Aegilops tauschii (Tausch's goatgrass).